The chain runs to 418 residues: Deubiquitinase and deneddylase Dub1 (418 aa).

Residues 1–10 (MLSPTNSTSK) are compositionally biased toward polar residues. The disordered stretch occupies residues 1–23 (MLSPTNSTSKKAPVPPQDSSKPV). A helical transmembrane segment spans residues 40–60 (TALAVLLVVVTLGLILLFYSF). The tract at residues 72–143 (TRPSTKEQPT…PPLPPKAPKP (72 aa)) is disordered. A compositionally biased stretch (pro residues) spans 86–141 (VPLPSPPLAVPRPSTPPPPVISRPSTPPAPTPAISPPSTPSAPKPSTPPPLPPKAP). Residues His288, Asp305, and Cys358 contribute to the active site.

Belongs to the peptidase C48 family.

The protein resides in the secreted. The protein localises to the host cell. It localises to the membrane. Its function is as follows. Effector proteins function to alter host cell physiology and promote bacterial survival in host tissues. This protease possesses deubiquitinating and deneddylating activities. This Chlamydia trachomatis serovar D (strain ATCC VR-885 / DSM 19411 / UW-3/Cx) protein is Deubiquitinase and deneddylase Dub1 (cdu1).